Here is a 788-residue protein sequence, read N- to C-terminus: Protein kintoun (788 aa).

3 disordered regions span residues 194 to 249 (LRKP…SEQD), 415 to 438 (NNSE…EISP), and 628 to 754 (HKEH…SSSV). The span at 225-241 (GKEKKDQKRVIKEEHKQ) shows a compositional bias: basic and acidic residues. Residues 417–427 (SEGLTSESNLD) show a composition bias toward polar residues. Composition is skewed to basic and acidic residues over residues 628–644 (HKEH…DVGV) and 667–682 (ENTE…RYEE). 2 stretches are compositionally biased toward polar residues: residues 685–701 (STSC…QKDS) and 744–754 (NFDSRPASSSV).

The protein belongs to the PIH1 family. Kintoun subfamily.

It localises to the cytoplasm. The protein localises to the dynein axonemal particle. Functionally, required for cytoplasmic pre-assembly of axonemal dyneins, thereby playing a central role in motility in cilia and flagella. Involved in pre-assembly of dynein arm complexes in the cytoplasm before intraflagellar transport loads them for the ciliary compartment. The chain is Protein kintoun from Xenopus laevis (African clawed frog).